The primary structure comprises 318 residues: Transaldolase (318 aa).

The active-site Schiff-base intermediate with substrate is Lys-132.

This sequence belongs to the transaldolase family. Type 1 subfamily. In terms of assembly, homodimer.

Its subcellular location is the cytoplasm. It carries out the reaction D-sedoheptulose 7-phosphate + D-glyceraldehyde 3-phosphate = D-erythrose 4-phosphate + beta-D-fructose 6-phosphate. It functions in the pathway carbohydrate degradation; pentose phosphate pathway; D-glyceraldehyde 3-phosphate and beta-D-fructose 6-phosphate from D-ribose 5-phosphate and D-xylulose 5-phosphate (non-oxidative stage): step 2/3. Its function is as follows. Transaldolase is important for the balance of metabolites in the pentose-phosphate pathway. The chain is Transaldolase from Allorhizobium ampelinum (strain ATCC BAA-846 / DSM 112012 / S4) (Agrobacterium vitis (strain S4)).